The following is a 100-amino-acid chain: Apolipoprotein C-II (100 aa).

The N-terminal stretch at 1–22 (MSSQFLLAFFLVLLVLGYEVQG) is a signal peptide. Residues 66 to 74 (SVDEKLRDM) form a lipid binding region. A lipoprotein lipase cofactor region spans residues 78 to 100 (SSAAMSTYAGIFTDQLFTLLKGE).

This sequence belongs to the apolipoprotein C2 family. Proapolipoprotein C-II is synthesized as a sialic acid containing glycoprotein which is subsequently desialylated prior to its proteolytic processing. Post-translationally, proapolipoprotein C-II, the major form found in plasma undergoes proteolytic cleavage of its N-terminal hexapeptide to generate the mature form apolipoprotein C-II, which occurs as the minor form in plasma.

The protein localises to the secreted. Functionally, component of chylomicrons, very low-density lipoproteins (VLDL), low-density lipoproteins (LDL), and high-density lipoproteins (HDL) in plasma. Plays an important role in lipoprotein metabolism as an activator of lipoprotein lipase. This Cricetulus griseus (Chinese hamster) protein is Apolipoprotein C-II (APOC2).